The chain runs to 512 residues: Histidine ammonia-lyase (512 aa).

The segment at residues Ala-143–Gly-145 is a cross-link (5-imidazolinone (Ala-Gly)). 2,3-didehydroalanine (Ser) is present on Ser-144.

This sequence belongs to the PAL/histidase family. Post-translationally, contains an active site 4-methylidene-imidazol-5-one (MIO), which is formed autocatalytically by cyclization and dehydration of residues Ala-Ser-Gly.

The protein resides in the cytoplasm. The catalysed reaction is L-histidine = trans-urocanate + NH4(+). It participates in amino-acid degradation; L-histidine degradation into L-glutamate; N-formimidoyl-L-glutamate from L-histidine: step 1/3. In Ruegeria pomeroyi (strain ATCC 700808 / DSM 15171 / DSS-3) (Silicibacter pomeroyi), this protein is Histidine ammonia-lyase.